The primary structure comprises 190 residues: UPF0398 protein LAR_0869 (190 aa).

It belongs to the UPF0398 family.

The protein is UPF0398 protein LAR_0869 of Limosilactobacillus reuteri subsp. reuteri (strain JCM 1112) (Lactobacillus reuteri).